Consider the following 284-residue polypeptide: Bifunctional protein FolD 2 (284 aa).

Residues 164-166 (GRG), S189, and I230 each bind NADP(+).

This sequence belongs to the tetrahydrofolate dehydrogenase/cyclohydrolase family. As to quaternary structure, homodimer.

It catalyses the reaction (6R)-5,10-methylene-5,6,7,8-tetrahydrofolate + NADP(+) = (6R)-5,10-methenyltetrahydrofolate + NADPH. The enzyme catalyses (6R)-5,10-methenyltetrahydrofolate + H2O = (6R)-10-formyltetrahydrofolate + H(+). Its pathway is one-carbon metabolism; tetrahydrofolate interconversion. Its function is as follows. Catalyzes the oxidation of 5,10-methylenetetrahydrofolate to 5,10-methenyltetrahydrofolate and then the hydrolysis of 5,10-methenyltetrahydrofolate to 10-formyltetrahydrofolate. This is Bifunctional protein FolD 2 from Desulfitobacterium hafniense (strain Y51).